Consider the following 336-residue polypeptide: tRNA N6-adenosine threonylcarbamoyltransferase (336 aa).

Fe cation is bound by residues His114 and His118. Substrate-binding positions include 136 to 140 (LVSGG), Asp169, Gly182, Asp186, and Asn275. Asp301 contributes to the Fe cation binding site.

The protein belongs to the KAE1 / TsaD family. The cofactor is Fe(2+).

It localises to the cytoplasm. It carries out the reaction L-threonylcarbamoyladenylate + adenosine(37) in tRNA = N(6)-L-threonylcarbamoyladenosine(37) in tRNA + AMP + H(+). Its function is as follows. Required for the formation of a threonylcarbamoyl group on adenosine at position 37 (t(6)A37) in tRNAs that read codons beginning with adenine. Is involved in the transfer of the threonylcarbamoyl moiety of threonylcarbamoyl-AMP (TC-AMP) to the N6 group of A37, together with TsaE and TsaB. TsaD likely plays a direct catalytic role in this reaction. The chain is tRNA N6-adenosine threonylcarbamoyltransferase from Streptococcus pneumoniae (strain Taiwan19F-14).